The chain runs to 175 residues: Ribosome maturation factor RimM (175 aa).

The 74-residue stretch at 100–173 (EGEYYFHEII…IIIIRPMEGL (74 aa)) folds into the PRC barrel domain.

This sequence belongs to the RimM family. In terms of assembly, binds ribosomal protein uS19.

It is found in the cytoplasm. An accessory protein needed during the final step in the assembly of 30S ribosomal subunit, possibly for assembly of the head region. Essential for efficient processing of 16S rRNA. May be needed both before and after RbfA during the maturation of 16S rRNA. It has affinity for free ribosomal 30S subunits but not for 70S ribosomes. The protein is Ribosome maturation factor RimM of Geobacillus thermodenitrificans (strain NG80-2).